The sequence spans 510 residues: Histidine ammonia-lyase (510 aa).

A cross-link (5-imidazolinone (Ala-Gly)) is located at residues 143-145 (ASG). Serine 144 carries the post-translational modification 2,3-didehydroalanine (Ser).

This sequence belongs to the PAL/histidase family. Contains an active site 4-methylidene-imidazol-5-one (MIO), which is formed autocatalytically by cyclization and dehydration of residues Ala-Ser-Gly.

It is found in the cytoplasm. The catalysed reaction is L-histidine = trans-urocanate + NH4(+). The protein operates within amino-acid degradation; L-histidine degradation into L-glutamate; N-formimidoyl-L-glutamate from L-histidine: step 1/3. In Psychromonas ingrahamii (strain DSM 17664 / CCUG 51855 / 37), this protein is Histidine ammonia-lyase.